The sequence spans 439 residues: Kinesin-like protein KIN-13 (439 aa).

1–5 provides a ligand contact to ATP; that stretch reads GSGKS. The region spanning 1–240 is the Kinesin motor domain; it reads GSGKSFTMMH…LRYADRVKEL (240 aa).

It belongs to the TRAFAC class myosin-kinesin ATPase superfamily. Kinesin family. KIN-13 subfamily. In terms of assembly, interacts with PLK. In terms of processing, phosphorylated by PLK.

Its subcellular location is the cytoplasm. It localises to the cytoskeleton. It is found in the cell projection. The protein resides in the cilium. The protein localises to the flagellum. Its subcellular location is the flagellum basal body. It localises to the flagellum axoneme. It is found in the spindle. The protein resides in the chromosome. The protein localises to the centromere. Its subcellular location is the kinetochore. Its function is as follows. Involved in cell cycle. Involved in formation of flagella, regulation of flagellar length, and formation of median bodies during interphase. Regulates flagellar length in all eight distal flagellar tips by promoting disassembly of the microtubules. Disassembles microtubules at the distal flagellar tips in a length-dependent manner in order to maintain different equilibrium lengths of the four flagellar pairs. Regulates interphase and mitotic microtubule dynamics. Regulates microtubule disassembly dynamics of the dual mitotic spindles and the median body. This Giardia intestinalis (Giardia lamblia) protein is Kinesin-like protein KIN-13.